The chain runs to 610 residues: UvrABC system protein C (610 aa).

The region spanning 16-94 is the GIY-YIG domain; the sequence is SQPGVYRMYD…IKLYQPRYNV (79 aa). The region spanning 204–239 is the UVR domain; it reads DQVLTQLIARMEKASQDLAFEEAARIRDQIQAVRRV.

This sequence belongs to the UvrC family. As to quaternary structure, interacts with UvrB in an incision complex.

The protein localises to the cytoplasm. In terms of biological role, the UvrABC repair system catalyzes the recognition and processing of DNA lesions. UvrC both incises the 5' and 3' sides of the lesion. The N-terminal half is responsible for the 3' incision and the C-terminal half is responsible for the 5' incision. This chain is UvrABC system protein C, found in Salmonella heidelberg (strain SL476).